We begin with the raw amino-acid sequence, 297 residues long: Large ribosomal subunit protein uL18 (297 aa).

The protein belongs to the universal ribosomal protein uL18 family. As to quaternary structure, component of the large ribosomal subunit (LSU).

The protein localises to the cytoplasm. Its subcellular location is the nucleus. Functionally, component of the ribosome, a large ribonucleoprotein complex responsible for the synthesis of proteins in the cell. The small ribosomal subunit (SSU) binds messenger RNAs (mRNAs) and translates the encoded message by selecting cognate aminoacyl-transfer RNA (tRNA) molecules. The large subunit (LSU) contains the ribosomal catalytic site termed the peptidyl transferase center (PTC), which catalyzes the formation of peptide bonds, thereby polymerizing the amino acids delivered by tRNAs into a polypeptide chain. The nascent polypeptides leave the ribosome through a tunnel in the LSU and interact with protein factors that function in enzymatic processing, targeting, and the membrane insertion of nascent chains at the exit of the ribosomal tunnel. The protein is Large ribosomal subunit protein uL18 (RpL5) of Lysiphlebus testaceipes (Greenbugs aphid parastoid).